The following is a 278-amino-acid chain: Tryptophan synthase alpha chain (278 aa).

Residues Glu-49 and Asp-60 each act as proton acceptor in the active site.

Belongs to the TrpA family. Tetramer of two alpha and two beta chains.

The enzyme catalyses (1S,2R)-1-C-(indol-3-yl)glycerol 3-phosphate + L-serine = D-glyceraldehyde 3-phosphate + L-tryptophan + H2O. The protein operates within amino-acid biosynthesis; L-tryptophan biosynthesis; L-tryptophan from chorismate: step 5/5. The alpha subunit is responsible for the aldol cleavage of indoleglycerol phosphate to indole and glyceraldehyde 3-phosphate. This Corynebacterium diphtheriae (strain ATCC 700971 / NCTC 13129 / Biotype gravis) protein is Tryptophan synthase alpha chain.